The sequence spans 622 residues: 1-deoxy-D-xylulose-5-phosphate synthase (622 aa).

Thiamine diphosphate-binding positions include His80 and 121 to 123 (GHS). Asp152 contacts Mg(2+). Thiamine diphosphate is bound by residues 153–154 (GA), Asn181, Tyr288, and Glu370. Residue Asn181 coordinates Mg(2+).

Belongs to the transketolase family. DXPS subfamily. As to quaternary structure, homodimer. Requires Mg(2+) as cofactor. The cofactor is thiamine diphosphate.

It carries out the reaction D-glyceraldehyde 3-phosphate + pyruvate + H(+) = 1-deoxy-D-xylulose 5-phosphate + CO2. Its pathway is metabolic intermediate biosynthesis; 1-deoxy-D-xylulose 5-phosphate biosynthesis; 1-deoxy-D-xylulose 5-phosphate from D-glyceraldehyde 3-phosphate and pyruvate: step 1/1. Catalyzes the acyloin condensation reaction between C atoms 2 and 3 of pyruvate and glyceraldehyde 3-phosphate to yield 1-deoxy-D-xylulose-5-phosphate (DXP). The sequence is that of 1-deoxy-D-xylulose-5-phosphate synthase from Shewanella amazonensis (strain ATCC BAA-1098 / SB2B).